The primary structure comprises 251 residues: Ubiquinone/menaquinone biosynthesis C-methyltransferase UbiE (251 aa).

S-adenosyl-L-methionine is bound by residues threonine 74, aspartate 95, and 123–124; that span reads NA.

The protein belongs to the class I-like SAM-binding methyltransferase superfamily. MenG/UbiE family.

It carries out the reaction a 2-demethylmenaquinol + S-adenosyl-L-methionine = a menaquinol + S-adenosyl-L-homocysteine + H(+). The catalysed reaction is a 2-methoxy-6-(all-trans-polyprenyl)benzene-1,4-diol + S-adenosyl-L-methionine = a 5-methoxy-2-methyl-3-(all-trans-polyprenyl)benzene-1,4-diol + S-adenosyl-L-homocysteine + H(+). Its pathway is quinol/quinone metabolism; menaquinone biosynthesis; menaquinol from 1,4-dihydroxy-2-naphthoate: step 2/2. It participates in cofactor biosynthesis; ubiquinone biosynthesis. Its function is as follows. Methyltransferase required for the conversion of demethylmenaquinol (DMKH2) to menaquinol (MKH2) and the conversion of 2-polyprenyl-6-methoxy-1,4-benzoquinol (DDMQH2) to 2-polyprenyl-3-methyl-6-methoxy-1,4-benzoquinol (DMQH2). In Pseudoalteromonas translucida (strain TAC 125), this protein is Ubiquinone/menaquinone biosynthesis C-methyltransferase UbiE.